The sequence spans 79 residues: Hematopoietic cell signal transducer (79 aa).

A signal peptide spans 1-18 (MAPPGGILFLLLLPVAAA). Topologically, residues 19 to 35 (QVTSGSCSGCGPLSLPL) are extracellular. The helical transmembrane segment at 36-56 (LAGLVAADAVVSLLIVVGVFV) threads the bilayer. At 57 to 79 (CGRPRSRPTQEDGKIYINMPGRG) the chain is on the cytoplasmic side. Tyrosine 72 carries the post-translational modification Phosphotyrosine. The tract at residues 72-74 (YIN) is GRB2 binding site. The segment at 72–75 (YINM) is PIK3R1 binding site.

Belongs to the DAP10 family. In terms of assembly, homodimer; Disulfide-linked. Heterohexamer composed of four subunits of HCST/DAP10 and two subunits of KLRK1. Interacts (via transmembrane domain) with KLRK1 (via transmembrane domain); the interaction is required for KLRK1 NK cell surface and induces NK cell-mediated cytotoxicity. Interacts with PIK3R1 and GRB2. Interacts with CLEC5A. Forms an CLEC5A/TYROBP/HCST trimolecular complex depending almost solely on TYROBP. Interacts with KLRK1. Interacts with CD300H. Phosphorylated; PIK3R1 and GRB2 associate specifically with tyrosine-phosphorylated HCST. Post-translationally, O-glycosylated. Expressed predominantly in lymphohematopoietic tissues.

It localises to the membrane. Functionally, transmembrane adapter protein which associates with KLRK1 to form an activation receptor KLRK1-HCST in lymphoid and myeloid cells; this receptor plays a major role in triggering cytotoxicity against target cells expressing cell surface ligands such as MHC class I chain-related MICA and MICB, and UL16-binding proteins (ULBPs); these ligands are up-regulated by stress conditions and pathological state such as viral infection and tumor transformation. Functions as a docking site for PI3-kinase PIK3R1 and GRB2. Interaction of ULBPs with KLRK1-HCST triggers calcium mobilization and activation of the PIK3R1, MAP2K/ERK, and JAK2/STAT5 signaling pathways. Both PIK3R1 and GRB2 are required for full KLRK1-HCST-mediated activation and ultimate killing of target cells. In NK cells, KLRK1-HCST signaling directly induces cytotoxicity and enhances cytokine production initiated via DAP12/TYROBP-associated receptors. In T-cells, it provides primarily costimulation for TCR-induced signals. KLRK1-HCST receptor plays a role in immune surveillance against tumors and is required for cytolysis of tumors cells; indeed, melanoma cells that do not express KLRK1 ligands escape from immune surveillance mediated by NK cells. This chain is Hematopoietic cell signal transducer (HCST), found in Sus scrofa (Pig).